We begin with the raw amino-acid sequence, 238 residues long: Ribonuclease 3 (238 aa).

In terms of domain architecture, RNase III spans 4–130 (IQTLFQTLNI…LFGAIYLDLG (127 aa)). E45 contacts Mg(2+). D49 is a catalytic residue. Residues D116 and E119 each coordinate Mg(2+). Residue E119 is part of the active site. The DRBM domain occupies 154–222 (DFKTQLQEIV…AQQALSKVAK (69 aa)). Positions 215–238 (QALSKVAKPKDLLNNKGGKEKELQ) are disordered. Basic and acidic residues predominate over residues 222 to 238 (KPKDLLNNKGGKEKELQ).

This sequence belongs to the ribonuclease III family. Homodimer. Requires Mg(2+) as cofactor.

It is found in the cytoplasm. It carries out the reaction Endonucleolytic cleavage to 5'-phosphomonoester.. In terms of biological role, digests double-stranded RNA. Involved in the processing of primary rRNA transcript to yield the immediate precursors to the large and small rRNAs (23S and 16S). Processes some mRNAs, and tRNAs when they are encoded in the rRNA operon. Processes pre-crRNA and tracrRNA of type II CRISPR loci if present in the organism. This Onion yellows phytoplasma (strain OY-M) protein is Ribonuclease 3.